The chain runs to 838 residues: MKYDFKNVERFCQDKWDFSVSKSSKQEKCYVLEMFPYPSGKIHMGHLRNYAIGDVIARYKRARGFEVLHPIGWDAFGLPAENAARDNNISPEIWTKENIDNMRAQLKSIGLSYNWNRELSTCEPNYYTHEQKFFLDFLKHGLAYRKESWVNWDPVDQTVLANEQVVDGKGWRSGAVVEKRKLSQWFLKITDFAEDLLKCLQSLKNWPEKVKTMQERWIGKSEGATIEFEVVGLNKKLKVFTTYPHTLFGASFCAVAAEHPIVQDLKNGSSVVIPVLDTGIQEIKSKRENDEKIGVYTGLNVKHPFLDKELPLYIANFVLMEYGEGAIFGCPAHDQRDFEFAQKYNLPIIPVISSAHLGVIPARDQNSYNGSQCQATQMTKEAYTGDGVMFNSEFLNGLMVSEAKEVIIKKLKEKGIGKKTTNYRLHDWGVSRQRYWGCPIPIIYCKDCGTVPVPEKDLPVILPADVEFTSGGNPLDKHPTWKFVDCPKCGKQAERETDTFDTFFESSWYFAAFCSEDKSIDKDACNRFMPVDYYIGGIEHAILHLLYSRFFCRALTKCGYFDIKEPFSTLITQGMVCHATYKDENGKWLFLAEAKELIARGTKVQVGKVEKMSKSKKNTVDPNFIIEKYGADTARLFVLSDTPPEKDMEWSDDGVEGCSRYVNKLWRMVMQLKPVNMHYDNKSVTGGLLEYRKKIHKLLHGLTDDLENCRLNCVVAKFREMTNLIAEIDVAAGKSLIDEGICILIRVIEPFMPHLAESLWQEIGGQPWPKADESLLVDDTVTIAVQINGKLRATIEVAINLPQEELKKIAIDSVSSKIDQNKVRTVYAVPNKIVNIVI.

A 'HIGH' region motif is present at residues 36 to 46; it reads PYPSGKIHMGH. The 'KMSKS' region motif lies at 611–615; sequence KMSKS. Residue Lys-614 coordinates ATP.

It belongs to the class-I aminoacyl-tRNA synthetase family.

It is found in the cytoplasm. The enzyme catalyses tRNA(Leu) + L-leucine + ATP = L-leucyl-tRNA(Leu) + AMP + diphosphate. In Wolbachia sp. subsp. Drosophila simulans (strain wRi), this protein is Leucine--tRNA ligase.